The primary structure comprises 476 residues: Glycogen synthase (476 aa).

ADP-alpha-D-glucose is bound at residue lysine 15.

The protein belongs to the glycosyltransferase 1 family. Bacterial/plant glycogen synthase subfamily.

The enzyme catalyses [(1-&gt;4)-alpha-D-glucosyl](n) + ADP-alpha-D-glucose = [(1-&gt;4)-alpha-D-glucosyl](n+1) + ADP + H(+). It participates in glycan biosynthesis; glycogen biosynthesis. Its function is as follows. Synthesizes alpha-1,4-glucan chains using ADP-glucose. This is Glycogen synthase from Streptococcus sanguinis (strain SK36).